Consider the following 662-residue polypeptide: uncharacterized protein (662 aa).

Transmembrane regions (helical) follow at residues 10–30, 46–66, 68–88, 101–121, 167–187, 193–213, 217–237, 263–283, 285–305, 312–332, 342–362, 373–393, 394–414, 432–452, 460–480, and 485–505; these read SSIV…GWPV, PVIG…FLPI, AINL…LSKG, GFCW…EIIP, LIYY…TGAT, IALT…LAVA, SAYA…KPAV, PWVP…MAYL, ILYS…AILA, MWAG…LSVS, EVLI…AVLI, KVVE…LDIP, GFWL…FLIW, ALTV…SVIM, VLIP…STTI, and LVGR…ILVG.

Its subcellular location is the cell membrane. This is an uncharacterized protein from Sinorhizobium fredii (strain NBRC 101917 / NGR234).